A 156-amino-acid polypeptide reads, in one-letter code: Snaclec trimecetin subunit alpha (156 aa).

The signal sequence occupies residues 1-23; the sequence is MGRFIFVSFGLLVVFLSLSGTGA. Disulfide bonds link Cys25–Cys36, Cys53–Cys150, and Cys125–Cys142. Positions 32–151 constitute a C-type lectin domain; that stretch reads FRRYCYKPFK…CGERNLFMCK (120 aa).

Belongs to the snaclec family. As to quaternary structure, heterodimer of subunits alpha and beta; disulfide-linked. As to expression, expressed by the venom gland.

The protein resides in the secreted. Functionally, snaclec that induces platelet aggregation in either human platelet rich plasma (PRP) or washed platelet suspensions. It causes aggregation in a dose-dependent manner even in the absence of various platelet agonists such as ADP or von Willebrand factor (vWF). Interestingly, it does not induce aggregation in rabbit PRP. A monoclonal antibody against the platelet GPIb receptor blocks the aggregation induced by trimecetin, suggesting that it acts by binding to GPIb (GP1BA/GP1BB). In Protobothrops mucrosquamatus (Taiwan habu), this protein is Snaclec trimecetin subunit alpha.